The following is a 409-amino-acid chain: Palmitoyltransferase ZDHHC23 (409 aa).

Topologically, residues 1–87 (MTQKGSMKPV…RIPWLRGAKK (87 aa)) are cytoplasmic. A helical transmembrane segment spans residues 88 to 106 (VNISIIPPLVLLPVFLHVA). The Lumenal portion of the chain corresponds to 107-109 (SWH). Residues 110–132 (FLLGVVVLTSLPVLALWYYYLTH) traverse the membrane as a helical segment. Residues 133–136 (RRKE) lie on the Cytoplasmic side of the membrane. A helical transmembrane segment spans residues 137-157 (QTLFFLSLGLFSLGYMYYVFL). Over 158 to 165 (QEVVPKGR) the chain is Lumenal. A helical membrane pass occupies residues 166-186 (VGPVQLAVLTCGLFLILLALH). The Cytoplasmic portion of the chain corresponds to 187–302 (RAKKNPGYLS…NSCVGESNHQ (116 aa)). The tract at residues 215–255 (RKGQEKTKGFPGADMSGSLNNRTTKDDPKGSSKMPAGSPTK) is disordered. A DHHC domain is found at 259 to 309 (DWCAKCQLVRPARAWHCRICGICVRRMDHHCVWINSCVGESNHQAFILALL). Cysteine 289 (S-palmitoyl cysteine intermediate) is an active-site residue. A helical transmembrane segment spans residues 303 to 323 (AFILALLIFLLTSVYGITLTL). Residues 324-331 (DTICRDRS) lie on the Lumenal side of the membrane. Residues 332–352 (VFTALFYCPGVYANYSSALSF) traverse the membrane as a helical segment. Residue threonine 353 is a topological domain, cytoplasmic. A helical transmembrane segment spans residues 354 to 374 (CVWYSVIITAGMAYIFLIQLI). At 375–409 (NISYNVTEREVQQALRQKTGRRLLCGLIVDTGLLG) the chain is on the lumenal side.

It belongs to the DHHC palmitoyltransferase family. Interacts with NOS1.

The protein resides in the golgi apparatus membrane. It is found in the golgi apparatus. Its subcellular location is the trans-Golgi network membrane. The enzyme catalyses L-cysteinyl-[protein] + hexadecanoyl-CoA = S-hexadecanoyl-L-cysteinyl-[protein] + CoA. Its function is as follows. Palmitoyltransferase that could catalyze the addition of palmitate onto various protein substrates and be involved in a variety of cellular processes. Palmitoyltransferase that mediates palmitoylation of KCNMA1, regulating localization of KCNMA1 to the plasma membrane. May be involved in NOS1 regulation and targeting to the synaptic membrane. The sequence is that of Palmitoyltransferase ZDHHC23 from Homo sapiens (Human).